Here is a 339-residue protein sequence, read N- to C-terminus: tRNA (cytidine(56)-2'-O)-methyltransferase (339 aa).

S-adenosyl-L-methionine contacts are provided by residues leucine 79 and 105–109 (GSEKV). An HD domain is found at 188–295 (LIEHVKAVEG…VAQADNLFAG (108 aa)).

The protein belongs to the aTrm56 family. In terms of assembly, homodimer.

Its subcellular location is the cytoplasm. The enzyme catalyses cytidine(56) in tRNA + S-adenosyl-L-methionine = 2'-O-methylcytidine(56) in tRNA + S-adenosyl-L-homocysteine + H(+). Its function is as follows. Specifically catalyzes the AdoMet-dependent 2'-O-ribose methylation of cytidine at position 56 in tRNAs. The sequence is that of tRNA (cytidine(56)-2'-O)-methyltransferase from Thermoplasma acidophilum (strain ATCC 25905 / DSM 1728 / JCM 9062 / NBRC 15155 / AMRC-C165).